The primary structure comprises 552 residues: MAAKVLKFSHEVLHAMSRGVEVLANAVKVTLGPKGRNVVLDKSFGAPTITKDGVSVAKEIELEDKFENMGAQMVKEVASRTSDDAGDGTTTATVLAQAILVEGIKAVIAGMNPMDLKRGIDKAVTAAVAELKKISKPCKDQKAIAQVGTISANSDKSIGDIIAEAMEKVGKEGVITVEDGSGLENALEVVEGMQFDRGYLSPYFINNQQNMSAELENPFILLVDKKISNIRELIPLLENVAKSGRPLLVIAEDIEGEALATLVVNNIRGVVKVAAVKAPGFGDRRKAMLQDIAVLTGGKVISEEVGLSLEAASLDDLGSAKRVVVTKDDTTIIDGSGDAGDIKNRVEQIRKEIENSSSDYDKEKLQERLAKLAGGVAVIKVGAATEVEMKEKKARVEDALHATRAAVEEGVVPGGGVALIRVLKSLDSVEVENEDQRVGVEIARRAMAYPLSQIVKNTGVQAAVVADKVLNHKDVNYGYNAATGEYGDMIEMGILDPTKVTRTALQNAASIAGLMITTECMVTEAPKKKEESMPGGGDMGGMGGMGGMGGMM.

ATP contacts are provided by residues 30-33, K51, 87-91, G415, 480-482, and D496; these read TLGP, DGTTT, and NAA.

This sequence belongs to the chaperonin (HSP60) family. As to quaternary structure, forms a cylinder of 14 subunits composed of two heptameric rings stacked back-to-back. Interacts with the co-chaperonin GroES.

The protein localises to the cytoplasm. It carries out the reaction ATP + H2O + a folded polypeptide = ADP + phosphate + an unfolded polypeptide.. In terms of biological role, together with its co-chaperonin GroES, plays an essential role in assisting protein folding. The GroEL-GroES system forms a nano-cage that allows encapsulation of the non-native substrate proteins and provides a physical environment optimized to promote and accelerate protein folding. This chain is Chaperonin GroEL, found in Coxiella burnetii (strain RSA 493 / Nine Mile phase I).